The following is a 483-amino-acid chain: Glutamyl-tRNA(Gln) amidotransferase subunit A (483 aa).

Catalysis depends on charge relay system residues K76 and S151. Residue S175 is the Acyl-ester intermediate of the active site.

This sequence belongs to the amidase family. GatA subfamily. In terms of assembly, heterotrimer of A, B and C subunits.

It carries out the reaction L-glutamyl-tRNA(Gln) + L-glutamine + ATP + H2O = L-glutaminyl-tRNA(Gln) + L-glutamate + ADP + phosphate + H(+). In terms of biological role, allows the formation of correctly charged Gln-tRNA(Gln) through the transamidation of misacylated Glu-tRNA(Gln) in organisms which lack glutaminyl-tRNA synthetase. The reaction takes place in the presence of glutamine and ATP through an activated gamma-phospho-Glu-tRNA(Gln). This chain is Glutamyl-tRNA(Gln) amidotransferase subunit A, found in Pseudomonas putida (strain W619).